The primary structure comprises 484 residues: tRNA sulfurtransferase (484 aa).

The THUMP domain occupies 63–167; the sequence is QAFGERLACI…RDNLYMVTKR (105 aa). Residues 185–186, Lys267, Gly289, and Gln298 contribute to the ATP site; that span reads LI. Cysteines 346 and 458 form a disulfide. The Rhodanese domain occupies 406–484; sequence IDTNQVVIDI…GYTNVKVYRP (79 aa). Catalysis depends on Cys458, which acts as the Cysteine persulfide intermediate.

It belongs to the ThiI family.

It is found in the cytoplasm. It carries out the reaction [ThiI sulfur-carrier protein]-S-sulfanyl-L-cysteine + a uridine in tRNA + 2 reduced [2Fe-2S]-[ferredoxin] + ATP + H(+) = [ThiI sulfur-carrier protein]-L-cysteine + a 4-thiouridine in tRNA + 2 oxidized [2Fe-2S]-[ferredoxin] + AMP + diphosphate. It catalyses the reaction [ThiS sulfur-carrier protein]-C-terminal Gly-Gly-AMP + S-sulfanyl-L-cysteinyl-[cysteine desulfurase] + AH2 = [ThiS sulfur-carrier protein]-C-terminal-Gly-aminoethanethioate + L-cysteinyl-[cysteine desulfurase] + A + AMP + 2 H(+). It participates in cofactor biosynthesis; thiamine diphosphate biosynthesis. Catalyzes the ATP-dependent transfer of a sulfur to tRNA to produce 4-thiouridine in position 8 of tRNAs, which functions as a near-UV photosensor. Also catalyzes the transfer of sulfur to the sulfur carrier protein ThiS, forming ThiS-thiocarboxylate. This is a step in the synthesis of thiazole, in the thiamine biosynthesis pathway. The sulfur is donated as persulfide by IscS. The polypeptide is tRNA sulfurtransferase (Shewanella baltica (strain OS155 / ATCC BAA-1091)).